The sequence spans 187 residues: NADH-quinone oxidoreductase subunit B (187 aa).

The segment covering 1–10 (MTADHNRALH) has biased composition (basic and acidic residues). A disordered region spans residues 1–22 (MTADHNRALHDAPTARGGEVRQ). Residues Cys-66, Cys-67, Cys-131, and Cys-161 each contribute to the [4Fe-4S] cluster site.

It belongs to the complex I 20 kDa subunit family. As to quaternary structure, NDH-1 is composed of 14 different subunits. Subunits NuoB, C, D, E, F, and G constitute the peripheral sector of the complex. It depends on [4Fe-4S] cluster as a cofactor.

Its subcellular location is the cell inner membrane. It catalyses the reaction a quinone + NADH + 5 H(+)(in) = a quinol + NAD(+) + 4 H(+)(out). NDH-1 shuttles electrons from NADH, via FMN and iron-sulfur (Fe-S) centers, to quinones in the respiratory chain. Couples the redox reaction to proton translocation (for every two electrons transferred, four hydrogen ions are translocated across the cytoplasmic membrane), and thus conserves the redox energy in a proton gradient. The polypeptide is NADH-quinone oxidoreductase subunit B (Erythrobacter litoralis (strain HTCC2594)).